Reading from the N-terminus, the 309-residue chain is (S)-sulfolactate dehydrogenase (309 aa).

Residues 151 to 152 (GI), aspartate 171, 231 to 233 (TAR), and aspartate 257 each bind NAD(+). The active site involves arginine 233. The active site involves glutamate 262. The active-site Proton donor is histidine 281. NAD(+) is bound at residue 281 to 284 (HIAG).

Belongs to the D-isomer specific 2-hydroxyacid dehydrogenase family.

The catalysed reaction is (2S)-3-sulfolactate + NAD(+) = 3-sulfopyruvate + NADH + H(+). Its function is as follows. Dehydrogenase of the (R,S)-sulfolactate degradation pathway that only acts on the (S)-enantiomer of 3-sulfolactate. Together with ComC, provides a racemase system that converts (2S)-3-sulfolactate to (2R)-3-sulfolactate, which is degraded further by (2R)-sulfolactate sulfo-lyase. Specific for NAD. Also able to form sulfolactate from sulfopyruvate. The chain is (S)-sulfolactate dehydrogenase (slcC) from Chromohalobacter salexigens (strain ATCC BAA-138 / DSM 3043 / CIP 106854 / NCIMB 13768 / 1H11).